Reading from the N-terminus, the 167-residue chain is Antibacterial peptide PMAP-37 (167 aa).

A signal peptide spans 1 to 29; that stretch reads METQRASLCLGRWSLWLLLLALVVPSASA. A propeptide spanning residues 30-130 is cleaved from the precursor; the sequence is QALSYREAVL…DITCNEIQSV (101 aa). Cystine bridges form between Cys-85–Cys-96 and Cys-107–Cys-124.

Belongs to the cathelicidin family.

The protein resides in the secreted. In terms of biological role, exerts antimicrobial activity against both Gram-positive and negative bacteria with minimal inhibitory concentrations ranging over 1-4 micro molar. Its activity appears to be mediated by its ability to damage bacterial membranes. The chain is Antibacterial peptide PMAP-37 (PMAP37) from Sus scrofa (Pig).